Reading from the N-terminus, the 308-residue chain is Very-long-chain enoyl-CoA reductase (308 aa).

At 1 to 86 (MKHYEVEILD…YFRDLGAQIS (86 aa)) the chain is on the cytoplasmic side. N6-acetyllysine is present on lysine 22. A Phosphoserine modification is found at serine 58. Lysine 60 is subject to N6-acetyllysine. Residues 87 to 106 (WVTVFLTEYAGPLFIYLLFY) form a helical membrane-spanning segment. Over 107 to 124 (FRVPFIYGRKYDFTSSRH) the chain is Lumenal. A helical membrane pass occupies residues 125–147 (TVVHLACICHSFHYIKRLLETLF). The Cytoplasmic segment spans residues 148–158 (VHRFSHGTMPL). Residues 159–180 (RNIFKNCTYYWGFAAWMAYYIN) traverse the membrane as a helical segment. Over 181–189 (HPLYTPPTY) the chain is Lumenal. The helical transmembrane segment at 190–216 (GAQQVKLALAIFVICQLGNFSIHMALR) threads the bilayer. Residues 217–245 (DLRPAGSKTRKIPYPTRNPFTWLFLLVSC) are Cytoplasmic-facing. A helical transmembrane segment spans residues 246-262 (PNYTYEVGSWIGFAIMT). Topologically, residues 263 to 264 (QC) are lumenal. A helical transmembrane segment spans residues 265–292 (LPVALFSLVGFTQMTIWAKGKHRSYLKE). Residues 293-308 (FRDYPPLRMPIIPFLL) lie on the Cytoplasmic side of the membrane.

This sequence belongs to the steroid 5-alpha reductase family. Interacts with ELOVL1 and LASS2. In terms of processing, glycosylated.

The protein resides in the endoplasmic reticulum membrane. It carries out the reaction a very-long-chain 2,3-saturated fatty acyl-CoA + NADP(+) = a very-long-chain (2E)-enoyl-CoA + NADPH + H(+). The enzyme catalyses octadecanoyl-CoA + NADP(+) = (2E)-octadecenoyl-CoA + NADPH + H(+). The catalysed reaction is (2E,7Z,10Z,13Z,16Z)-docosapentaenoyl-CoA + NADPH + H(+) = (7Z,10Z,13Z,16Z)-docosatetraenoyl-CoA + NADP(+). It catalyses the reaction (2E,7Z,10Z,13Z,16Z,19Z)-docosahexaenoyl-CoA + NADPH + H(+) = (7Z,10Z,13Z,16Z,19Z)-docosapentaenoyl-CoA + NADP(+). It carries out the reaction (2E,8Z,11Z,14Z)-eicosatetraenoyl-CoA + NADPH + H(+) = (8Z,11Z,14Z)-eicosatrienoyl-CoA + NADP(+). The enzyme catalyses (2E)-hexadecenoyl-CoA + NADPH + H(+) = hexadecanoyl-CoA + NADP(+). The protein operates within lipid metabolism; fatty acid biosynthesis. It participates in lipid metabolism; sphingolipid metabolism. Its function is as follows. Involved in both the production of very long-chain fatty acids for sphingolipid synthesis and the degradation of the sphingosine moiety in sphingolipids through the sphingosine 1-phosphate metabolic pathway. Catalyzes the last of the four reactions of the long-chain fatty acids elongation cycle. This endoplasmic reticulum-bound enzymatic process, allows the addition of 2 carbons to the chain of long- and very long-chain fatty acids/VLCFAs per cycle. This enzyme reduces the trans-2,3-enoyl-CoA fatty acid intermediate to an acyl-CoA that can be further elongated by entering a new cycle of elongation. Thereby, it participates in the production of VLCFAs of different chain lengths that are involved in multiple biological processes as precursors of membrane lipids and lipid mediators. Catalyzes the saturation step of the sphingosine 1-phosphate metabolic pathway, the conversion of trans-2-hexadecenoyl-CoA to palmitoyl-CoA. The chain is Very-long-chain enoyl-CoA reductase (TECR) from Bos taurus (Bovine).